We begin with the raw amino-acid sequence, 81 residues long: Acyl carrier protein (81 aa).

The 79-residue stretch at 1-79 (MDREEILQKI…EAVDYVVEHQ (79 aa)) folds into the Carrier domain. At S39 the chain carries O-(pantetheine 4'-phosphoryl)serine.

Belongs to the acyl carrier protein (ACP) family. 4'-phosphopantetheine is transferred from CoA to a specific serine of apo-ACP by AcpS. This modification is essential for activity because fatty acids are bound in thioester linkage to the sulfhydryl of the prosthetic group.

The protein localises to the cytoplasm. Its pathway is lipid metabolism; fatty acid biosynthesis. Its function is as follows. Carrier of the growing fatty acid chain in fatty acid biosynthesis. This Rubrobacter xylanophilus (strain DSM 9941 / JCM 11954 / NBRC 16129 / PRD-1) protein is Acyl carrier protein.